A 277-amino-acid chain; its full sequence is Large ribosomal subunit protein uL2 (277 aa).

The interval 215-263 (LGRKPHQRGSAMNPVDHPHGGGEGRTGAGRVPVSPWGQPAKGLKTRKKR) is disordered.

The protein belongs to the universal ribosomal protein uL2 family. In terms of assembly, part of the 50S ribosomal subunit. Forms a bridge to the 30S subunit in the 70S ribosome.

Functionally, one of the primary rRNA binding proteins. Required for association of the 30S and 50S subunits to form the 70S ribosome, for tRNA binding and peptide bond formation. It has been suggested to have peptidyltransferase activity; this is somewhat controversial. Makes several contacts with the 16S rRNA in the 70S ribosome. This is Large ribosomal subunit protein uL2 from Deinococcus geothermalis (strain DSM 11300 / CIP 105573 / AG-3a).